The primary structure comprises 437 residues: O-acetyl-L-homoserine sulfhydrylase (437 aa).

Lys216 carries the N6-(pyridoxal phosphate)lysine modification.

It belongs to the trans-sulfuration enzymes family. In terms of assembly, homohexamer. Pyridoxal 5'-phosphate serves as cofactor.

It carries out the reaction O-acetyl-L-homoserine + hydrogen sulfide = L-homocysteine + acetate. It catalyses the reaction O-acetyl-L-homoserine + methanethiol = L-methionine + acetate + H(+). It functions in the pathway amino-acid biosynthesis; L-methionine biosynthesis via de novo pathway; L-homocysteine from O-acetyl-L-homoserine: step 1/1. Its activity is regulated as follows. Inhibited by methionine and cystathionine. In terms of biological role, catalyzes the conversion of O-acetyl-L-homoserine (OAH) into homocysteine in the methionine biosynthesis pathway. Can also use dimethyldisulfide and methanethiol as reduced sulfur sources, leading to the direct formation of methionine. Has weak cystathionine gamma-synthase activity. This Corynebacterium glutamicum (strain ATCC 13032 / DSM 20300 / JCM 1318 / BCRC 11384 / CCUG 27702 / LMG 3730 / NBRC 12168 / NCIMB 10025 / NRRL B-2784 / 534) protein is O-acetyl-L-homoserine sulfhydrylase.